We begin with the raw amino-acid sequence, 490 residues long: Tegument protein VP16 (490 aa).

A disordered region spans residues 12-37; sequence MDADGASPPPPRPAGGPKNTPAAPPL. Ser18, Ser353, Ser411, and Ser452 each carry phosphoserine. Residues 411–490 form a transcriptional activation region; it reads STAPPTDVSL…DALGIDEYGG (80 aa).

It belongs to the herpesviridae tegument protein VP16 protein family. As to quaternary structure, interacts with VP22. Interacts with gH (via C-terminus). Interacts with the virion host shutoff protein (vhs). Interacts with VP11/12. Associates with the VP16-induced complex; binding to host HCFC1 activates VP16 for association with the octamer motif-binding host protein POU2F1, to form a multiprotein-DNA complex responsible for activating transcription of the viral immediate early genes.

Its subcellular location is the virion tegument. The protein resides in the host nucleus. Its function is as follows. Transcriptional activator of immediate-early (IE) gene products (alpha genes). Acts as a key activator of lytic infection by initiating the lytic program through the assembly of the transcriptional regulatory VP16-induced complex composed of VP16 and two cellular factors, HCFC1 and POU2F 1. VP16-induced complex represents a regulatory switch: when it is on, it promotes IE-gene expression and thus lytic infection, and when it is off, it limits IE-gene transcription favoring latent infection. May play a role in the aggregation of tegument proteins around nucleocapsids during virus morphogenesis. The sequence is that of Tegument protein VP16 from Homo sapiens (Human).